The primary structure comprises 378 residues: Cobalt-precorrin-5B C(1)-methyltransferase (378 aa).

It belongs to the CbiD family.

The enzyme catalyses Co-precorrin-5B + S-adenosyl-L-methionine = Co-precorrin-6A + S-adenosyl-L-homocysteine. It participates in cofactor biosynthesis; adenosylcobalamin biosynthesis; cob(II)yrinate a,c-diamide from sirohydrochlorin (anaerobic route): step 6/10. In terms of biological role, catalyzes the methylation of C-1 in cobalt-precorrin-5B to form cobalt-precorrin-6A. This is Cobalt-precorrin-5B C(1)-methyltransferase from Tolumonas auensis (strain DSM 9187 / NBRC 110442 / TA 4).